The chain runs to 2591 residues: Eukaryotic translation initiation factor 2-alpha kinase PK4 (2591 aa).

The Cytoplasmic segment spans residues 1-16 (MYNKGINICLNEDNKC). A helical membrane pass occupies residues 17-37 (IILLHIIFNKCIVSFVASHIL). At 38-1488 (VEGKICFLNR…EFSSQKHKKS (1451 aa)) the chain is on the lumenal side. Residues 1028 to 1048 (KKKRNSKKGENRNKKRKTQKR) form a disordered region. Residues 1489–1509 (WYWNIFYAITLVIVIPFIFIY) traverse the membrane as a helical segment. Residues 1510 to 2591 (RLFKKQTNNK…NIINGNEVDH (1082 aa)) lie on the Cytoplasmic side of the membrane. Residues 1781–1840 (NLNSADEENKSPYAKKYSDEKKNRSKSSKYIENTQSNNNDNTNGNMNVGNHINNDKMNNK) are disordered. Low complexity predominate over residues 1813–1832 (NTQSNNNDNTNGNMNVGNHI). ATP contacts are provided by residues 1880-1888 (IGQGGFGSV) and Lys1905. 2 disordered regions span residues 2123-2157 (DNDESNGSGHSKKNDNDERKSLNNQNGIYNTGGDI) and 2183-2212 (IKNTQGTSINGTINRNTISDETGTQGTNNN). Over residues 2134–2143 (KKNDNDERKS) the composition is skewed to basic and acidic residues. The Protein kinase domain maps to 2181–2532 (MTIKNTQGTS…KIKVLLDPHL (352 aa)). The active-site Proton acceptor is Asp2369. Residue Thr2436 is modified to Phosphothreonine; by autocatalysis. Positions 2558 to 2574 (STNPNGDIKENVNQNNL) are enriched in polar residues. A disordered region spans residues 2558–2591 (STNPNGDIKENVNQNNLVDDKGNNNIINGNEVDH). Residues 2580 to 2591 (NNNIINGNEVDH) show a composition bias toward low complexity.

This sequence belongs to the protein kinase superfamily. Ser/Thr protein kinase family. GCN2 subfamily. May form oligomers in response to stress; oligomerization may result in catalytic activity. Interacts with BIP; the interaction is disrupted in response to stress.

It localises to the endoplasmic reticulum membrane. The catalysed reaction is L-seryl-[protein] + ATP = O-phospho-L-seryl-[protein] + ADP + H(+). It catalyses the reaction L-threonyl-[protein] + ATP = O-phospho-L-threonyl-[protein] + ADP + H(+). Dissociation from BIP and oligomerization, may results autophosphorylation and kinase activity induction. Its function is as follows. During the asexual blood stage, phosphorylates translation factor eIF2alpha in late schizonts resulting in protein translation inhibition. Plays a role in trophozoite differentiation into schizonts. The chain is Eukaryotic translation initiation factor 2-alpha kinase PK4 from Plasmodium berghei (strain Anka).